Here is a 158-residue protein sequence, read N- to C-terminus: Ribosome maturation factor RimP (158 aa).

This sequence belongs to the RimP family.

It localises to the cytoplasm. Functionally, required for maturation of 30S ribosomal subunits. The protein is Ribosome maturation factor RimP of Pseudomonas fluorescens (strain ATCC BAA-477 / NRRL B-23932 / Pf-5).